A 528-amino-acid chain; its full sequence is MEDGRSTFKVIIIGAGVTGLTLAHCLAKACIDYVLLDKGIVAPSFGTTITLQPHGCRILHQLGCLDAVLASCDVMSGAQCRDPSGKTFASNDFFRVVKKFTGYDTRTLDRKVFLRTMYEQLPDQSRVHERARVEEIIEDNEKTRVVLQDGQEFVGNLVIGTDGVHSKVREIMWDNANTAKPGMITVEEKRAMVTQYNAIVMACSPVPGLGSHDMEVTSNDKFSFLLLCQPDWISIIVHNKLPEDQQCTWPTRRRYTESDMEALVSRILECPITETVVFGELWKRRLKAQMISLEEGVLEHWFFGRIVLAGDAIHKVTPNSALGGNTAMEDAVTVANTLHTLLAAHPNKKPSTVELQDAFRDNYQNARMDRVRAIVKVGGDLTRQQAYDGWKRYLIQRWLTPIVGLDTLAKNIAGLCVTAPKLSYIDFEEKRGMLNWQDTVAADKELEMHHENVGGVRAEYHKSKWLLTSADWSGGFEAVFPQILGVLMVMWSSVWLFHLAFSRHCISGFGGEVWRTFGADNETSCVAK.

The N-terminal stretch at 1–23 is a signal peptide; sequence MEDGRSTFKVIIIGAGVTGLTLA. FAD contacts are provided by D37, R110, D311, and G324. The chain crosses the membrane as a helical span at residues 479–499; sequence VFPQILGVLMVMWSSVWLFHL. A glycan (N-linked (GlcNAc...) asparagine) is linked at N521.

Belongs to the paxM FAD-dependent monooxygenase family. It depends on FAD as a cofactor.

It is found in the membrane. Its pathway is polyketide biosynthesis. FAD-dependent monooxygenase; part of the gene cluster that mediates the biosynthesis of depudecin, a highly oxidized eleven-carbon linear polyketide that acts as a histone deacetylase (HDAC) inhibitor and makes a small contribution to pathogenesis. The reducing polyketide synthase DEP5 is the central enzyme in depudecin biosynthesis by yielding the backbone polyketide chain. The monooxygenases DEP2 and DEP4, as well as the uncharacterized protein DEP1, then act as tailoring enzymes to modify the intermediate polyketide chain into depudecin. This is FAD-dependent monooxygenase DEP2 from Alternaria brassicicola (Dark leaf spot agent).